Consider the following 307-residue polypeptide: Acetyl-coenzyme A carboxylase carboxyl transferase subunit beta (307 aa).

Positions 1 to 21 (MAMADQRNDKPGRPAAQRERR) are disordered. The CoA carboxyltransferase N-terminal domain occupies 43 to 307 (LWVKCPETGE…MGRERLSPAA (265 aa)).

Belongs to the AccD/PCCB family. Acetyl-CoA carboxylase is a heterohexamer composed of biotin carboxyl carrier protein (AccB), biotin carboxylase (AccC) and two subunits each of ACCase subunit alpha (AccA) and ACCase subunit beta (AccD).

Its subcellular location is the cytoplasm. The catalysed reaction is N(6)-carboxybiotinyl-L-lysyl-[protein] + acetyl-CoA = N(6)-biotinyl-L-lysyl-[protein] + malonyl-CoA. It participates in lipid metabolism; malonyl-CoA biosynthesis; malonyl-CoA from acetyl-CoA: step 1/1. Functionally, component of the acetyl coenzyme A carboxylase (ACC) complex. Biotin carboxylase (BC) catalyzes the carboxylation of biotin on its carrier protein (BCCP) and then the CO(2) group is transferred by the transcarboxylase to acetyl-CoA to form malonyl-CoA. This is Acetyl-coenzyme A carboxylase carboxyl transferase subunit beta from Phenylobacterium zucineum (strain HLK1).